Consider the following 433-residue polypeptide: Serine--tRNA ligase (433 aa).

Position 235–237 (235–237) interacts with L-serine; the sequence is TSE. 266 to 268 lines the ATP pocket; it reads RSE. Glu289 serves as a coordination point for L-serine. 353–356 contacts ATP; sequence EISS. Ser388 lines the L-serine pocket.

It belongs to the class-II aminoacyl-tRNA synthetase family. Type-1 seryl-tRNA synthetase subfamily. Homodimer. The tRNA molecule binds across the dimer.

It is found in the cytoplasm. It carries out the reaction tRNA(Ser) + L-serine + ATP = L-seryl-tRNA(Ser) + AMP + diphosphate + H(+). It catalyses the reaction tRNA(Sec) + L-serine + ATP = L-seryl-tRNA(Sec) + AMP + diphosphate + H(+). It functions in the pathway aminoacyl-tRNA biosynthesis; selenocysteinyl-tRNA(Sec) biosynthesis; L-seryl-tRNA(Sec) from L-serine and tRNA(Sec): step 1/1. Its function is as follows. Catalyzes the attachment of serine to tRNA(Ser). Is also able to aminoacylate tRNA(Sec) with serine, to form the misacylated tRNA L-seryl-tRNA(Sec), which will be further converted into selenocysteinyl-tRNA(Sec). This is Serine--tRNA ligase from Burkholderia ambifaria (strain MC40-6).